The sequence spans 113 residues: Histone H2B (113 aa).

Residues 1–21 (MPATPAKRAKRVQQEKRHHKK) are disordered. Basic residues predominate over residues 7–21 (KRAKRVQQEKRHHKK). Lys109 participates in a covalent cross-link: Glycyl lysine isopeptide (Lys-Gly) (interchain with G-Cter in ubiquitin).

It belongs to the histone H2B family. As to quaternary structure, the nucleosome is a histone octamer containing two molecules each of H2A, H2B, H3 and H4 assembled in one H3-H4 heterotetramer and two H2A-H2B heterodimers. The octamer wraps approximately 147 bp of DNA. In terms of processing, monoubiquitination of Lys-109 gives a specific tag for epigenetic transcriptional activation and is also prerequisite for histone H3 'Lys-4' and 'Lys-79' methylation.

The protein resides in the nucleus. Its subcellular location is the chromosome. In terms of biological role, core component of nucleosome. Nucleosomes wrap and compact DNA into chromatin, limiting DNA accessibility to the cellular machineries which require DNA as a template. Histones thereby play a central role in transcription regulation, DNA repair, DNA replication and chromosomal stability. DNA accessibility is regulated via a complex set of post-translational modifications of histones, also called histone code, and nucleosome remodeling. This is Histone H2B (H2B1) from Euplotes crassus.